We begin with the raw amino-acid sequence, 388 residues long: Mannitol-1-phosphate 5-dehydrogenase (388 aa).

4-15 (AVHFGAGNIGRG) contacts NAD(+).

The protein belongs to the mannitol dehydrogenase family.

It catalyses the reaction D-mannitol 1-phosphate + NAD(+) = beta-D-fructose 6-phosphate + NADH + H(+). The polypeptide is Mannitol-1-phosphate 5-dehydrogenase (Lactococcus lactis subsp. cremoris (strain MG1363)).